Here is a 333-residue protein sequence, read N- to C-terminus: Glyceraldehyde-3-phosphate dehydrogenase (333 aa).

NAD(+)-binding positions include 11–12 (RI), D35, M79, and S121. D-glyceraldehyde 3-phosphate is bound by residues 150-152 (SCT), T181, 210-211 (TG), and R233. C151 functions as the Nucleophile in the catalytic mechanism. Residue N315 coordinates NAD(+).

Belongs to the glyceraldehyde-3-phosphate dehydrogenase family. Homotetramer.

The protein resides in the cytoplasm. The catalysed reaction is D-glyceraldehyde 3-phosphate + phosphate + NAD(+) = (2R)-3-phospho-glyceroyl phosphate + NADH + H(+). It participates in carbohydrate degradation; glycolysis; pyruvate from D-glyceraldehyde 3-phosphate: step 1/5. In terms of biological role, catalyzes the oxidative phosphorylation of glyceraldehyde 3-phosphate (G3P) to 1,3-bisphosphoglycerate (BPG) using the cofactor NAD. The first reaction step involves the formation of a hemiacetal intermediate between G3P and a cysteine residue, and this hemiacetal intermediate is then oxidized to a thioester, with concomitant reduction of NAD to NADH. The reduced NADH is then exchanged with the second NAD, and the thioester is attacked by a nucleophilic inorganic phosphate to produce BPG. This Bacteroides fragilis (strain YCH46) protein is Glyceraldehyde-3-phosphate dehydrogenase (gap).